A 756-amino-acid polypeptide reads, in one-letter code: Membrane-anchored protein 1 (756 aa).

The first 24 residues, methionine 1 to glycine 24, serve as a signal peptide directing secretion. Residues asparagine 52 and asparagine 64 are each glycosylated (N-linked (GlcNAc...) asparagine). Helical transmembrane passes span isoleucine 91–valine 111, isoleucine 120–leucine 140, and glutamine 148–leucine 168. A glycan (N-linked (GlcNAc...) asparagine) is linked at asparagine 190. The disordered stretch occupies residues tyrosine 281–arginine 328. Positions serine 289–serine 300 are enriched in low complexity. Asparagine 396 and asparagine 407 each carry an N-linked (GlcNAc...) asparagine glycan. The segment at glutamate 427–lysine 453 is disordered. The segment covering methionine 433 to proline 447 has biased composition (polar residues). Serine 438 carries the post-translational modification Phosphoserine. Asparagine 459, asparagine 470, asparagine 471, asparagine 496, asparagine 497, asparagine 521, asparagine 522, asparagine 547, asparagine 548, asparagine 573, asparagine 574, asparagine 594, asparagine 598, asparagine 599, asparagine 618, asparagine 623, asparagine 649, asparagine 664, asparagine 676, and asparagine 685 each carry an N-linked (GlcNAc...) asparagine glycan. The disordered stretch occupies residues methionine 482–asparagine 650. Low complexity predominate over residues asparagine 485–arginine 520. Composition is skewed to polar residues over residues arginine 593–asparagine 605, arginine 617–phenylalanine 629, and glycine 640–asparagine 650. The segment covering glycine 686–threonine 697 has biased composition (polar residues). A disordered region spans residues glycine 686 to proline 713. Asparagine 715 carries an N-linked (GlcNAc...) asparagine glycan. The interval phenylalanine 735–arginine 756 is disordered.

It to yeast YOL019W and YMR063W.

It is found in the cell membrane. The protein resides in the cell tip. Required for correct cell separation at high temperatures. In Schizosaccharomyces pombe (strain 972 / ATCC 24843) (Fission yeast), this protein is Membrane-anchored protein 1 (mac1).